The chain runs to 138 residues: Small ribosomal subunit protein uS12m (138 aa).

A mitochondrion-targeting transit peptide spans 1–29; it reads MSWSGLLHGLNTSLTCGPALVPRLWATCS. The interval 36–56 is disordered; sequence MHRLGPPKRPPRKLGPTEGRP.

It belongs to the universal ribosomal protein uS12 family. As to quaternary structure, component of the mitochondrial small ribosomal subunit (mt-SSU). Mature mammalian 55S mitochondrial ribosomes consist of a small (28S) and a large (39S) subunit. The 28S small subunit contains a 12S ribosomal RNA (12S mt-rRNA) and 30 different proteins. The 39S large subunit contains a 16S rRNA (16S mt-rRNA), a copy of mitochondrial valine transfer RNA (mt-tRNA(Val)), which plays an integral structural role, and 52 different proteins.

It is found in the mitochondrion. The chain is Small ribosomal subunit protein uS12m (MRPS12) from Homo sapiens (Human).